The sequence spans 423 residues: Large ribosomal subunit protein mL37 (423 aa).

A mitochondrion-targeting transit peptide spans 1–29 (MALASGPAMRALAGSARLGLGGYGAPKRG).

This sequence belongs to the mitochondrion-specific ribosomal protein mL37 family. Component of the mitochondrial ribosome large subunit (39S) which comprises a 16S rRNA and about 50 distinct proteins.

The protein resides in the mitochondrion. The chain is Large ribosomal subunit protein mL37 (Mrpl37) from Rattus norvegicus (Rat).